The following is a 498-amino-acid chain: ATP synthase subunit beta, chloroplastic (498 aa).

Gly-172–Thr-179 provides a ligand contact to ATP.

It belongs to the ATPase alpha/beta chains family. In terms of assembly, F-type ATPases have 2 components, CF(1) - the catalytic core - and CF(0) - the membrane proton channel. CF(1) has five subunits: alpha(3), beta(3), gamma(1), delta(1), epsilon(1). CF(0) has four main subunits: a(1), b(1), b'(1) and c(9-12).

The protein localises to the plastid. The protein resides in the chloroplast thylakoid membrane. The enzyme catalyses ATP + H2O + 4 H(+)(in) = ADP + phosphate + 5 H(+)(out). Functionally, produces ATP from ADP in the presence of a proton gradient across the membrane. The catalytic sites are hosted primarily by the beta subunits. The chain is ATP synthase subunit beta, chloroplastic from Gossypium hirsutum (Upland cotton).